We begin with the raw amino-acid sequence, 505 residues long: Maturase K (505 aa).

Belongs to the intron maturase 2 family. MatK subfamily.

The protein localises to the plastid. It is found in the chloroplast. Usually encoded in the trnK tRNA gene intron. Probably assists in splicing its own and other chloroplast group II introns. This is Maturase K from Physcomitrium patens (Spreading-leaved earth moss).